The primary structure comprises 117 residues: Ribonuclease P protein component (117 aa).

The protein belongs to the RnpA family. As to quaternary structure, consists of a catalytic RNA component (M1 or rnpB) and a protein subunit.

It carries out the reaction Endonucleolytic cleavage of RNA, removing 5'-extranucleotides from tRNA precursor.. Its function is as follows. RNaseP catalyzes the removal of the 5'-leader sequence from pre-tRNA to produce the mature 5'-terminus. It can also cleave other RNA substrates such as 4.5S RNA. The protein component plays an auxiliary but essential role in vivo by binding to the 5'-leader sequence and broadening the substrate specificity of the ribozyme. This is Ribonuclease P protein component from Thermotoga sp. (strain RQ2).